Reading from the N-terminus, the 156-residue chain is MNIIKANVAAPDARVAITIARFNQFINDSLLDGAVDALTRIGQVKDDNITVVWVPGAYELPLATEALAKSGKYDAVVALGTVIRGGTAHFEYVAGGASNGLASVAQGSGVPVAFGVLTTESIEQAIERAGTKAGNKGAEAALTALEMINVLKAIKA.

5-amino-6-(D-ribitylamino)uracil is bound by residues Phe22, Ala57 to Glu59, and Thr81 to Ile83. Position 86–87 (Gly86–Thr87) interacts with (2S)-2-hydroxy-3-oxobutyl phosphate. His89 serves as the catalytic Proton donor. Phe114 contributes to the 5-amino-6-(D-ribitylamino)uracil binding site. Arg128 is a binding site for (2S)-2-hydroxy-3-oxobutyl phosphate.

The protein belongs to the DMRL synthase family. In terms of assembly, forms an icosahedral capsid composed of 60 subunits, arranged as a dodecamer of pentamers.

It catalyses the reaction (2S)-2-hydroxy-3-oxobutyl phosphate + 5-amino-6-(D-ribitylamino)uracil = 6,7-dimethyl-8-(1-D-ribityl)lumazine + phosphate + 2 H2O + H(+). Its pathway is cofactor biosynthesis; riboflavin biosynthesis; riboflavin from 2-hydroxy-3-oxobutyl phosphate and 5-amino-6-(D-ribitylamino)uracil: step 1/2. Catalyzes the formation of 6,7-dimethyl-8-ribityllumazine by condensation of 5-amino-6-(D-ribitylamino)uracil with 3,4-dihydroxy-2-butanone 4-phosphate. This is the penultimate step in the biosynthesis of riboflavin. The protein is 6,7-dimethyl-8-ribityllumazine synthase of Salmonella heidelberg (strain SL476).